The sequence spans 297 residues: N-acetylmuramic acid 6-phosphate etherase (297 aa).

An SIS domain is found at 55 to 218 (AAAALKSGGR…STGAMVKFGK (164 aa)). Catalysis depends on Glu83, which acts as the Proton donor. Glu114 is a catalytic residue.

The protein belongs to the GCKR-like family. MurNAc-6-P etherase subfamily. In terms of assembly, homodimer.

It carries out the reaction N-acetyl-D-muramate 6-phosphate + H2O = N-acetyl-D-glucosamine 6-phosphate + (R)-lactate. It participates in amino-sugar metabolism; 1,6-anhydro-N-acetylmuramate degradation. The protein operates within amino-sugar metabolism; N-acetylmuramate degradation. It functions in the pathway cell wall biogenesis; peptidoglycan recycling. In terms of biological role, specifically catalyzes the cleavage of the D-lactyl ether substituent of MurNAc 6-phosphate, producing GlcNAc 6-phosphate and D-lactate. Together with AnmK, is also required for the utilization of anhydro-N-acetylmuramic acid (anhMurNAc) either imported from the medium or derived from its own cell wall murein, and thus plays a role in cell wall recycling. The sequence is that of N-acetylmuramic acid 6-phosphate etherase from Salmonella schwarzengrund (strain CVM19633).